The following is a 1097-amino-acid chain: Translation initiation factor IF-2 (1097 aa).

The disordered stretch occupies residues 79-458 (LEKRVSPQAD…RVIKKKPKKA (380 aa)). The segment covering 97–112 (AKKEASQEKADAHAKL) has biased composition (basic and acidic residues). Over residues 157-173 (AATLAVEEAPIAAAPTE) the composition is skewed to low complexity. 2 stretches are compositionally biased toward basic and acidic residues: residues 174–190 (EPMH…KIDS) and 202–221 (VEVH…HAEE). Residues 224–236 (TPTTEASSEETSA) are compositionally biased toward low complexity. Residues 258–267 (RKTQNTTNVS) show a composition bias toward polar residues. Over residues 268–286 (EENKQHEKQPETLKSDKAM) the composition is skewed to basic and acidic residues. Residues 340–363 (SDSLQAEISRQQNEISNRFSQSEN) show a composition bias toward polar residues. Basic residues predominate over residues 376–385 (HKKKRKRKKN). A compositionally biased stretch (basic and acidic residues) spans 402–443 (PKQEEKPVKKEKPKEREKPAAGKKEQTPGKKPVREDQKERVL). The region spanning 591–761 (TRPPVVTIMG…LVEAELLELK (171 aa)) is the tr-type G domain. The interval 600-607 (GHVDHGKT) is G1. Position 600–607 (600–607 (GHVDHGKT)) interacts with GTP. Residues 625–629 (GITQH) are G2. Residues 647–650 (DTPG) are G3. GTP contacts are provided by residues 647-651 (DTPGH) and 701-704 (NKID). Positions 701–704 (NKID) are G4. The G5 stretch occupies residues 737 to 739 (SAK).

It belongs to the TRAFAC class translation factor GTPase superfamily. Classic translation factor GTPase family. IF-2 subfamily.

The protein localises to the cytoplasm. Functionally, one of the essential components for the initiation of protein synthesis. Protects formylmethionyl-tRNA from spontaneous hydrolysis and promotes its binding to the 30S ribosomal subunits. Also involved in the hydrolysis of GTP during the formation of the 70S ribosomal complex. This is Translation initiation factor IF-2 from Chloroherpeton thalassium (strain ATCC 35110 / GB-78).